Reading from the N-terminus, the 339-residue chain is Annexin A2 (339 aa).

S2 is subject to N-acetylserine. Positions 2–24 (STVHEILCKLSLEGDHSTPPSAY) are S100A10-binding site. Y24 bears the Phosphotyrosine; by SRC mark. The residue at position 26 (S26) is a Phosphoserine; by PKC. Annexin repeat units follow at residues 33–104 (FDAE…GLLK) and 105–176 (TPAQ…ALAK). N6-acetyllysine; alternate is present on K49. Residue K49 forms a Glycyl lysine isopeptide (Lys-Gly) (interchain with G-Cter in SUMO1); alternate linkage. K49 is covalently cross-linked (Glycyl lysine isopeptide (Lys-Gly) (interchain with G-Cter in SUMO2); alternate). An N6-acetyllysine modification is found at K152. Phosphoserine is present on S184. Annexin repeat units lie at residues 189 to 261 (ELID…NLVQ) and 265 to 336 (NKPL…YLCG). A Phosphotyrosine modification is found at Y199. K227 bears the N6-acetyllysine mark.

This sequence belongs to the annexin family. As to quaternary structure, heterotetramer containing 2 light chains of S100A10/p11 and 2 heavy chains of ANXA2/p36. Interacts with ATP1B1. Interacts with DYSF. Interacts with COCH. Interacts (via repeat Annexin 1) with PCSK9 (via the C-terminal domain); the interaction inhibits the degradation of LDLR. Interacts with CEACAM1 (via the cytoplasmic domain); this interaction is regulated by phosphorylation of CEACAM1. Interacts with APPL2 and APPL1; targets APPL2 to endosomes and acting in parallel to RAB5A. Interacts with S100A4. May interact with UBAP2. Interacts with PLEKHG4B; this interaction is required for PLEKHG4B localization to cell-cell adhesions. In terms of processing, ISGylated.

The protein localises to the secreted. The protein resides in the extracellular space. Its subcellular location is the extracellular matrix. It localises to the basement membrane. It is found in the melanosome. In terms of biological role, calcium-regulated membrane-binding protein whose affinity for calcium is greatly enhanced by anionic phospholipids. It binds two calcium ions with high affinity. May be involved in heat-stress response. Inhibits PCSK9-enhanced LDLR degradation, probably reduces PCSK9 protein levels via a translational mechanism but also competes with LDLR for binding with PCSK9. Binds to endosomes damaged by phagocytosis of particulate wear debris and participates in endosomal membrane stabilization, thereby limiting NLRP3 inflammasome activation. Required for endothelial cell surface plasmin generation and may support fibrinolytic surveillance and neoangiogenesis. The protein is Annexin A2 (ANXA2) of Bos taurus (Bovine).